The following is a 63-amino-acid chain: Large ribosomal subunit protein bL32 (63 aa).

Basic residues predominate over residues 1–18 (MPVPKRKTSPSRRGKRRS). A disordered region spans residues 1–26 (MPVPKRKTSPSRRGKRRSHDGLRPEN).

This sequence belongs to the bacterial ribosomal protein bL32 family.

This is Large ribosomal subunit protein bL32 from Neorickettsia sennetsu (strain ATCC VR-367 / Miyayama) (Ehrlichia sennetsu).